The chain runs to 605 residues: Anaerobic ribonucleoside-triphosphate reductase (605 aa).

DCTP contacts are provided by His64 and His66. DGTP-binding residues include His64, His66, Asp67, Glu100, and Lys103. Residues Glu100, Lys103, Gln114, Lys146, and 445–448 (AENL) contribute to the dCTP site. 4 residues coordinate dATP: Glu100, Lys103, Gln114, and Lys146. Position 100 (Glu100) interacts with dTTP. The dTTP site is built by Gln114 and Lys146. Residues Lys146, Asn447, and Leu448 each contribute to the dGTP site. Residues 482–605 (ENITPFEKIS…KEIMHRVKHQ (124 aa)) enclose the Glycine radical domain. Cys543, Cys546, Cys561, and Cys564 together coordinate Zn(2+). Residue Gly580 is modified to Glycine radical.

It belongs to the anaerobic ribonucleoside-triphosphate reductase family. As to quaternary structure, homodimer. Forms a tetramer composed of two NrdD and two NrdG subunits.

It carries out the reaction a ribonucleoside 5'-triphosphate + formate + H(+) = a 2'-deoxyribonucleoside 5'-triphosphate + CO2 + H2O. Activated under anaerobic conditions by NrdG, a tightly associated activase. Activation involves the formation of a glycyl radical at Gly-580. In terms of biological role, catalyzes the conversion of ribonucleotides into deoxyribonucleotides, which are required for DNA synthesis and repair. In Enterobacteria phage T4 (Bacteriophage T4), this protein is Anaerobic ribonucleoside-triphosphate reductase.